The sequence spans 256 residues: Thiazole synthase (256 aa).

The active-site Schiff-base intermediate with DXP is K98. 1-deoxy-D-xylulose 5-phosphate contacts are provided by residues G159, 185–186 (AG), and 207–208 (NT).

The protein belongs to the ThiG family. As to quaternary structure, homotetramer. Forms heterodimers with either ThiH or ThiS.

It localises to the cytoplasm. It carries out the reaction [ThiS sulfur-carrier protein]-C-terminal-Gly-aminoethanethioate + 2-iminoacetate + 1-deoxy-D-xylulose 5-phosphate = [ThiS sulfur-carrier protein]-C-terminal Gly-Gly + 2-[(2R,5Z)-2-carboxy-4-methylthiazol-5(2H)-ylidene]ethyl phosphate + 2 H2O + H(+). Its pathway is cofactor biosynthesis; thiamine diphosphate biosynthesis. Catalyzes the rearrangement of 1-deoxy-D-xylulose 5-phosphate (DXP) to produce the thiazole phosphate moiety of thiamine. Sulfur is provided by the thiocarboxylate moiety of the carrier protein ThiS. In vitro, sulfur can be provided by H(2)S. The polypeptide is Thiazole synthase (Syntrophobacter fumaroxidans (strain DSM 10017 / MPOB)).